Reading from the N-terminus, the 221-residue chain is Enolase-phosphatase E1 (221 aa).

The protein belongs to the HAD-like hydrolase superfamily. MasA/MtnC family. Monomer. It depends on Mg(2+) as a cofactor.

The catalysed reaction is 5-methylsulfanyl-2,3-dioxopentyl phosphate + H2O = 1,2-dihydroxy-5-(methylsulfanyl)pent-1-en-3-one + phosphate. Its pathway is amino-acid biosynthesis; L-methionine biosynthesis via salvage pathway; L-methionine from S-methyl-5-thio-alpha-D-ribose 1-phosphate: step 3/6. The protein operates within amino-acid biosynthesis; L-methionine biosynthesis via salvage pathway; L-methionine from S-methyl-5-thio-alpha-D-ribose 1-phosphate: step 4/6. Functionally, bifunctional enzyme that catalyzes the enolization of 2,3-diketo-5-methylthiopentyl-1-phosphate (DK-MTP-1-P) into the intermediate 2-hydroxy-3-keto-5-methylthiopentenyl-1-phosphate (HK-MTPenyl-1-P), which is then dephosphorylated to form the acireductone 1,2-dihydroxy-3-keto-5-methylthiopentene (DHK-MTPene). This is Enolase-phosphatase E1 from Hydrogenobaculum sp. (strain Y04AAS1).